Consider the following 901-residue polypeptide: Phosphatidylinositol 3-kinase catalytic subunit type 3 (901 aa).

A C2 PI3K-type domain is found at L21–Q189. Positions R302–R527 constitute a PIK helical domain. The PI3K/PI4K catalytic domain maps to I607–M886. The tract at residues F613–M619 is G-loop. Residues G755–N763 are catalytic loop. An activation loop region spans residues H774–T795.

The protein belongs to the PI3/PI4-kinase family. In terms of assembly, interacts with bec-1. May interact with dyn-1. Requires Mn(2+) as cofactor. In terms of tissue distribution, ubiquitous.

The protein localises to the nucleus outer membrane. It localises to the cytoplasm. It is found in the cytoplasmic granule. The protein resides in the cell projection. Its subcellular location is the phagocytic cup. It catalyses the reaction a 1,2-diacyl-sn-glycero-3-phospho-(1D-myo-inositol) + ATP = a 1,2-diacyl-sn-glycero-3-phospho-(1D-myo-inositol-3-phosphate) + ADP + H(+). Its activity is regulated as follows. Inhibited by wortmannin. Functionally, catalytic subunit of the PI3K complex that mediates formation of phosphatidylinositol 3-phosphate. Together with bec-1, mediates the production of phosphatidylinositol 3-phosphate on intracellular vesicles and thereby regulates membrane trafficking. Plays a role in endosome-to-Golgi retrograde transport of mig-14. Involved in clearance of apoptotic cell corpses by phagosomes. Phagosome maturation requires two sequential and non-overlapping pulses of phosphatidylinositol-3-phosphate (PI3P) on the vesicle surface which mediates recruitment of sortins snx-1 and lst-4 and small GTPases rab-5, rab-2 and rab-7, downstream of dynamin dyn-1. The first pulse is initiated by piki-1, then maintained by vps-34 which also produces the second pulse. Required for embryonic development. Together with bec-1, involved in L3/L4 larval molting stage probably by regulating cuticle shedding. Regulates the expansion of the nucleus outer membrane. Involved in the secretion and localization of lrp-1 at the apical surface of hyp7 syncytium. May regulate endocytosis in hypodermal cells. May play a role in the formation of gut granules (a lysosome-related organelle). Plays a role in germ stem cell proliferation during larval development. This Caenorhabditis elegans protein is Phosphatidylinositol 3-kinase catalytic subunit type 3.